The following is a 59-amino-acid chain: MGFFNNNPVIEFFHRITRKPSTIAMWVFAGLICSSTFYLMFMSSPTIDFNSKSKKKNDK.

This is an uncharacterized protein from Saccharomyces cerevisiae (strain ATCC 204508 / S288c) (Baker's yeast).